Consider the following 178-residue polypeptide: Large ribosomal subunit protein uL6 (178 aa).

Belongs to the universal ribosomal protein uL6 family. As to quaternary structure, part of the 50S ribosomal subunit.

In terms of biological role, this protein binds to the 23S rRNA, and is important in its secondary structure. It is located near the subunit interface in the base of the L7/L12 stalk, and near the tRNA binding site of the peptidyltransferase center. This Francisella tularensis subsp. holarctica (strain FTNF002-00 / FTA) protein is Large ribosomal subunit protein uL6.